The primary structure comprises 285 residues: 3-methyl-2-oxobutanoate hydroxymethyltransferase (285 aa).

A disordered region spans residues 1–22 (MSEHNVYGAAQPAQPGQPAQPR). Positions 8–21 (GAAQPAQPGQPAQP) are enriched in low complexity. Residues Asp-66 and Asp-105 each coordinate Mg(2+). Residues 66–67 (DS), Asp-105, and Lys-135 each bind 3-methyl-2-oxobutanoate. Position 137 (Glu-137) interacts with Mg(2+). Glu-203 serves as the catalytic Proton acceptor.

Belongs to the PanB family. In terms of assembly, homodecamer; pentamer of dimers. Mg(2+) is required as a cofactor.

The protein localises to the cytoplasm. It catalyses the reaction 3-methyl-2-oxobutanoate + (6R)-5,10-methylene-5,6,7,8-tetrahydrofolate + H2O = 2-dehydropantoate + (6S)-5,6,7,8-tetrahydrofolate. It participates in cofactor biosynthesis; (R)-pantothenate biosynthesis; (R)-pantoate from 3-methyl-2-oxobutanoate: step 1/2. Catalyzes the reversible reaction in which hydroxymethyl group from 5,10-methylenetetrahydrofolate is transferred onto alpha-ketoisovalerate to form ketopantoate. The polypeptide is 3-methyl-2-oxobutanoate hydroxymethyltransferase (Mycolicibacterium paratuberculosis (strain ATCC BAA-968 / K-10) (Mycobacterium paratuberculosis)).